The sequence spans 200 residues: dTTP/UTP pyrophosphatase (200 aa).

Asp-76 acts as the Proton acceptor in catalysis.

It belongs to the Maf family. YhdE subfamily. A divalent metal cation is required as a cofactor.

Its subcellular location is the cytoplasm. The catalysed reaction is dTTP + H2O = dTMP + diphosphate + H(+). It catalyses the reaction UTP + H2O = UMP + diphosphate + H(+). Functionally, nucleoside triphosphate pyrophosphatase that hydrolyzes dTTP and UTP. May have a dual role in cell division arrest and in preventing the incorporation of modified nucleotides into cellular nucleic acids. The chain is dTTP/UTP pyrophosphatase from Acetivibrio thermocellus (strain ATCC 27405 / DSM 1237 / JCM 9322 / NBRC 103400 / NCIMB 10682 / NRRL B-4536 / VPI 7372) (Clostridium thermocellum).